The chain runs to 266 residues: MILLVDIGNSRIKWARLDGGKPADMGAVTRGKTGIKRVLSKAWKEFGDVNRVVVANVGGPKVAEQLEQWLQTHWQIAPEFLTARSNGYGIRNAYSKPETLGIDRWLGLVAVRQRYRGGDRKKAICIVDCGTAITLDVLAADGKHLGGLIIPGLAMMPKFLADHTAGINETTEAVEYSLLASTTSAAINAGALYGAVAFIDRVSHDVAVEMKGELKFVITGGDAPRILPLLRDKYEHLPDLVLRGLARVAKDTSKVRRETDLDCAAQ.

Residue 6 to 13 (DIGNSRIK) participates in ATP binding. Substrate-binding positions include Tyr94 and 101–104 (GIDR). The active-site Proton acceptor is the Asp103. Residue Asp128 participates in K(+) binding. Residue Thr131 coordinates ATP. Thr183 contacts substrate.

The protein belongs to the type III pantothenate kinase family. As to quaternary structure, homodimer. The cofactor is NH4(+). K(+) is required as a cofactor.

The protein resides in the cytoplasm. The catalysed reaction is (R)-pantothenate + ATP = (R)-4'-phosphopantothenate + ADP + H(+). The protein operates within cofactor biosynthesis; coenzyme A biosynthesis; CoA from (R)-pantothenate: step 1/5. Its function is as follows. Catalyzes the phosphorylation of pantothenate (Pan), the first step in CoA biosynthesis. The sequence is that of Type III pantothenate kinase from Nitrosococcus oceani (strain ATCC 19707 / BCRC 17464 / JCM 30415 / NCIMB 11848 / C-107).